The sequence spans 402 residues: MADKVLRAKRKQFINSVSVGTINGLLDELLEKRVLNQEEMDTIKLANITVMEKARDLCDHVTKKGPRASQMFITYICNEDCYLAEILELQSGPSAETVFVTEDSKGGHPFSSETKEKLNKEGGAFPGPSGSLKFCPLEIAQKLWKENHSEIYPIMKTPTRTRLALIICNTDFQHLSRRVGADVDLREMKLLLQDLGYTVKVKENLTALEMTKELKEFAACPEHKTSDSTFLVFMSHGLQEGICGITYSNEVADILKVDTIFQMMNTLKCPSLKDKPKVIIIQACRGEKQGVVLLKDSVGNSEEGFLTDAIFEDDGIKKAHIEKDFIAFCSSTPDNVSWRHPVRGSLFIESLIKHMKEYAWSCDLEDIFRKVRFSFEQPDSRLQMPTTERVTLTKRFYLFPGH.

Residues 1–91 enclose the CARD domain; sequence MADKVLRAKR…YLAEILELQS (91 aa). The propeptide occupies 1 to 118; sequence MADKVLRAKR…PFSSETKEKL (118 aa). Catalysis depends on residues histidine 236 and cysteine 284. The propeptide occupies 297 to 314; it reads SVGNSEEGFLTDAIFEDD. Serine 301 is subject to Phosphoserine.

The protein belongs to the peptidase C14A family. Heterotetramer that consists of two anti-parallel arranged heterodimers, each one formed by a 20 kDa (Caspase-1 subunit p20) and a 10 kDa (Caspase-1 subunit p10) subunit. May be a component of the inflammasome, a protein complex which also includes PYCARD, CARD8 and NLRP2 and whose function would be the activation of pro-inflammatory caspases. Component of the AIM2 PANoptosome complex, a multiprotein complex that drives inflammatory cell death (PANoptosis). Both the p10 and p20 subunits interact with MEFV. Interacts with CARD17P/INCA and CARD18. Interacts with SERPINB1; this interaction regulates CASP1 activity. As to quaternary structure, heterotetramer that consists of two anti-parallel arranged heterodimers, each one formed by a 20 kDa (Caspase-1 subunit p20) and a 10 kDa (Caspase-1 subunit p10) subunit. Post-translationally, the two subunits are derived from the precursor sequence by an autocatalytic mechanism. In terms of processing, ubiquitinated via 'Lys-11'-linked polyubiquitination. Deubiquitinated by USP8.

The protein resides in the cytoplasm. Its subcellular location is the cell membrane. It catalyses the reaction Strict requirement for an Asp residue at position P1 and has a preferred cleavage sequence of Tyr-Val-Ala-Asp-|-.. In terms of biological role, thiol protease involved in a variety of inflammatory processes by proteolytically cleaving other proteins, such as the precursors of the inflammatory cytokines interleukin-1 beta (IL1B) and interleukin 18 (IL18) as well as the pyroptosis inducer Gasdermin-D (GSDMD), into active mature peptides. Plays a key role in cell immunity as an inflammatory response initiator: once activated through formation of an inflammasome complex, it initiates a pro-inflammatory response through the cleavage of the two inflammatory cytokines IL1B and IL18, releasing the mature cytokines which are involved in a variety of inflammatory processes. Cleaves a tetrapeptide after an Asp residue at position P1. Also initiates pyroptosis, a programmed lytic cell death pathway, through cleavage of GSDMD. In contrast to cleavage of interleukin IL1B, recognition and cleavage of GSDMD is not strictly dependent on the consensus cleavage site but depends on an exosite interface on CASP1 that recognizes and binds the Gasdermin-D, C-terminal (GSDMD-CT) part. Cleaves and activates CASP7 in response to bacterial infection, promoting plasma membrane repair. Upon inflammasome activation, during DNA virus infection but not RNA virus challenge, controls antiviral immunity through the cleavage of CGAS, rendering it inactive. In apoptotic cells, cleaves SPHK2 which is released from cells and remains enzymatically active extracellularly. The protein is Caspase-1 (Casp1) of Rattus norvegicus (Rat).